Reading from the N-terminus, the 153-residue chain is MALYEHIFLARQDISAQQVDALVEQYKGVIESFGGKVGRVENWGLKSLTYRIKKNRKAHYALMDIDAPAAAVHEVERQMRINEDVLRYMTIAVEAHEEGPSAMMQKRDRDDRPRRDGDRPDRGPREDRGPRPPREGGFGDREDRPRRPREDRA.

The disordered stretch occupies residues E94 to A153.

Belongs to the bacterial ribosomal protein bS6 family.

Functionally, binds together with bS18 to 16S ribosomal RNA. In Agrobacterium fabrum (strain C58 / ATCC 33970) (Agrobacterium tumefaciens (strain C58)), this protein is Small ribosomal subunit protein bS6.